We begin with the raw amino-acid sequence, 498 residues long: Type II secretion system protein E (498 aa).

Residue 261–268 (GPTGSGKS) coordinates ATP. Residues C394, C397, C425, and C428 each contribute to the Zn(2+) site.

Belongs to the GSP E family. Forms homooligomers; most probably hexamers. Interacts with OutL/GspL. Requires Zn(2+) as cofactor.

The protein resides in the cell inner membrane. The catalysed reaction is ATP + H2O + cellular proteinSide 1 = ADP + phosphate + cellular proteinSide 2.. ATPase component of the type II secretion system required for the energy-dependent secretion of extracellular factors such as proteases and toxins from the periplasm. Acts as a molecular motor to provide the energy that is required for assembly of the pseudopilus and the extrusion of substrates generated in the cytoplasm. The protein is Type II secretion system protein E (outE) of Pectobacterium carotovorum subsp. carotovorum (Erwinia carotovora subsp. carotovora).